Consider the following 129-residue polypeptide: uncharacterized protein (129 aa).

Disordered regions lie at residues 1–57 and 87–129; these read MGGG…LPNH and PVSS…WLWW. Residues 10-20 are compositionally biased toward basic and acidic residues; it reads SGEERREKRSG. A compositionally biased stretch (low complexity) spans 87-99; the sequence is PVSSSPSRSPSSS.

This is an uncharacterized protein from Homo sapiens (Human).